Reading from the N-terminus, the 152-residue chain is MVKAVAVLSSSEGVSGTIFFTQAADGPTTVTGEISGLKPGHHGFHVHALGDTTNGCMSTGPHFNPAGKEHGAPEDDIRHAGDLGNVNVGDDGKVSFSIIDSQIPLTGPNSIVGRAVVVHADPDDLGKGGHELSKTTGNAGGRVACGVIGLQG.

Cu cation is bound by residues His-45, His-47, and His-62. Cys-56 and Cys-145 are joined by a disulfide. Zn(2+)-binding residues include His-62, His-70, His-79, and Asp-82. Residue His-119 coordinates Cu cation.

This sequence belongs to the Cu-Zn superoxide dismutase family. In terms of assembly, homodimer. It depends on Cu cation as a cofactor. Zn(2+) is required as a cofactor.

The protein localises to the cytoplasm. It carries out the reaction 2 superoxide + 2 H(+) = H2O2 + O2. Its function is as follows. Destroys radicals which are normally produced within the cells and which are toxic to biological systems. The protein is Superoxide dismutase [Cu-Zn] (SODCC) of Carica papaya (Papaya).